Reading from the N-terminus, the 362-residue chain is MTTPTIELKPSAHPLSDSERAAILANPGFGRHFTDHMVTIKWTEGRGWHDGQLVPYAPLSLDPATMVLHYAQEIFEGLKAYRRPDGSVATFRPEKNGARFQASSRRLGMPELPVDTFIEACDALVAQDEKWVPAHGGEESLYLRPFMIATEVGLGVRPANEYLFIVIASPAGAYFPGGVKPVSIWVSEDRVRAVPGGMGDAKTGGNYAASLLAQAEAAAKGCDQVCYLDAIERKWVEELGGMNLYFVYGNKIVTPSLTGSILEGVTRDSLLTVARDLGYEAEEGRVSVDQWQRDSENGTLTEVFACGTAAVITPVGTVKRAGAQWQQSGGETGEVTQRLRDALLDIQRGTVADPHGWMHTLA.

An N6-(pyridoxal phosphate)lysine modification is found at Lys-202.

Belongs to the class-IV pyridoxal-phosphate-dependent aminotransferase family. Pyridoxal 5'-phosphate serves as cofactor.

It catalyses the reaction L-leucine + 2-oxoglutarate = 4-methyl-2-oxopentanoate + L-glutamate. It carries out the reaction L-isoleucine + 2-oxoglutarate = (S)-3-methyl-2-oxopentanoate + L-glutamate. The catalysed reaction is L-valine + 2-oxoglutarate = 3-methyl-2-oxobutanoate + L-glutamate. It functions in the pathway amino-acid biosynthesis; L-isoleucine biosynthesis; L-isoleucine from 2-oxobutanoate: step 4/4. It participates in amino-acid biosynthesis; L-leucine biosynthesis; L-leucine from 3-methyl-2-oxobutanoate: step 4/4. The protein operates within amino-acid biosynthesis; L-valine biosynthesis; L-valine from pyruvate: step 4/4. In terms of biological role, acts on leucine, isoleucine and valine. This is Probable branched-chain-amino-acid aminotransferase (ilvE) from Streptomyces coelicolor (strain ATCC BAA-471 / A3(2) / M145).